An 872-amino-acid polypeptide reads, in one-letter code: Lysosomal cholesterol signaling protein (872 aa).

Residues 1–40 (MNSFSNLPAENLTIAVNMTKTLPTAVMHGFNSTNDPPSMS) lie on the Lumenal side of the membrane. Positions 3-372 (SFSNLPAENL…SAWLLTFPTM (370 aa)) are PIN-like transporter. 3 N-linked (GlcNAc...) asparagine glycosylation sites follow: asparagine 11, asparagine 17, and asparagine 31. The chain crosses the membrane as a helical span at residues 41-61 (ITRLFPALLECFGIVLCGYIA). Positions 45 and 59 each coordinate cholesterol. Residues 62-81 (GRANVITSTQAKGLGNFVSR) lie on the Cytoplasmic side of the membrane. A helical transmembrane segment spans residues 82–102 (FALPALLFKNMVVLNFSNVDW). Over 103–106 (SFLY) the chain is Lumenal. Residues 107 to 127 (SILIAKASVFFIVCVLTLLVA) traverse the membrane as a helical segment. The Cytoplasmic segment spans residues 128-135 (SPDSRFSK). Residues 136–156 (AGLFPIFATQSNDFALGYPIV) form a discontinuously helical membrane-spanning segment. Residues 157–169 (EALYQTTYPEYLQ) are Lumenal-facing. The chain crosses the membrane as a helical span at residues 170 to 190 (YIYLVAPISLMMLNPIGFIFC). Over 191–215 (EIQKWKDTQNASQNKIKIVGLGLLR) the chain is Cytoplasmic. The chain crosses the membrane as a discontinuously helical span at residues 216-236 (VLQNPIVFMVFIGIAFNFILD). Residues 237 to 245 (RKVPVYVEN) are Lumenal-facing. The discontinuously helical transmembrane segment at 246-266 (FLDGLGNSFSGSALFYLGLTM) threads the bilayer. The Cytoplasmic segment spans residues 267-275 (VGKIKRLKK). Residues glycine 268, lysine 269, and isoleucine 270 each contribute to the cholesterol site. The helical transmembrane segment at 276–296 (SAFVVLILLITAKLLVLPLLC) threads the bilayer. At 297-317 (REMVELLDKGDSVVNHTSLSN) the chain is on the lumenal side. N-linked (GlcNAc...) asparagine glycosylation is present at asparagine 311. A discontinuously helical transmembrane segment spans residues 318–338 (YAFLYGVFPVAPGVAIFATQF). Topologically, residues 339–348 (NMEVEIITSG) are cytoplasmic. A helical transmembrane segment spans residues 349 to 369 (MVISTFVSAPIMYVSAWLLTF). The Lumenal portion of the chain corresponds to 370–383 (PTMDPKPLAYAIQN). Positions 382 to 719 (QNVSFDISIV…FGIFGLDKHL (338 aa)) are GPCR. N-linked (GlcNAc...) asparagine glycosylation is present at asparagine 383. The chain crosses the membrane as a helical span at residues 384 to 404 (VSFDISIVSLISLIWSQAILL). Residues 405–416 (LSKKYKQLPHML) lie on the Cytoplasmic side of the membrane. The helical transmembrane segment at 417 to 437 (TTNLLIAQSIVCAGMMIWNFV) threads the bilayer. Over 438–440 (KEK) the chain is Lumenal. The helical transmembrane segment at 441–461 (NFVGQILVFVLLYSSLYSTYL) threads the bilayer. The Cytoplasmic portion of the chain corresponds to 462-482 (WTGLLAISLFLLKKRERVQIP). The chain crosses the membrane as a helical span at residues 483 to 503 (VGIIIISGWGIPALLVGVLLI). Topologically, residues 504–522 (TGKHSGDSIDSAFFYGKEQ) are lumenal. The helical transmembrane segment at 523–543 (MITTAVTLFCSILIAGISLMC) threads the bilayer. Over 544-662 (MNRTAQAGSY…GDQQLTRHVL (119 aa)) the chain is Cytoplasmic. Arginine 659 lines the cholesterol pocket. The helical transmembrane segment at 663–683 (LCLLLIIGLFANLSSCLWWLF) threads the bilayer. Over 684 to 693 (NQEPGRLYVE) the chain is Lumenal. Residues 694-714 (LQFFCAVFNFGQGFISFGIFG) traverse the membrane as a helical segment. The Cytoplasmic portion of the chain corresponds to 715-872 (LDKHLIILPF…SSPPSHSPKT (158 aa)). The DEP domain occupies 759–837 (YHRDLCIRNI…DEYLFYRFLQ (79 aa)).

In terms of assembly, homodimer; via the transporter region and DEP domain. Interacts with the GATOR1 complex; preventing interaction between GATOR1 and KICSTOR; interaction is disrupted upon cholesterol starvation.

It is found in the lysosome membrane. Functionally, cholesterol-binding protein that acts as a regulator of mTORC1 signaling pathway. Acts as a sensor of cholesterol to signal cholesterol sufficiency to mTORC1: in presence of cholesterol, binds cholesterol, leading to disruption of the interaction between the GATOR1 and KICSTOR complexes and promotion of mTORC1 signaling. Upon cholesterol starvation, GPR155/LYCHOS is unable to perturb the association between GATOR1 and KICSTOR, leading to mTORC1 signaling inhibition. Binds indole-3-acetic acid and may play a role in tryptophan metabolism. In Pongo abelii (Sumatran orangutan), this protein is Lysosomal cholesterol signaling protein (GPR155).